Reading from the N-terminus, the 1155-residue chain is Cilia- and flagella-associated protein 251 (1155 aa).

Composition is skewed to basic and acidic residues over residues 1–19 (MSDA…GETE) and 31–59 (KEVE…KTGE). Disordered stretches follow at residues 1–144 (MSDA…KLSL) and 167–225 (LDQI…DIQS). A compositionally biased stretch (acidic residues) spans 60–69 (EEGEEEEEKE). Positions 70-95 (EEGKKDKKIVMEETEEKAGESQEKEA) are enriched in basic and acidic residues. Residues 99–111 (QEETTVEPQEVTE) show a composition bias toward low complexity. Polar residues-rich tracts occupy residues 118 to 128 (TQITDSQSVTS) and 172 to 182 (PEEQQISSPER). The segment covering 201-220 (GQERRDLEPENREEGQERTV) has biased composition (basic and acidic residues). 14 WD repeats span residues 341–383 (PVHT…IWKW), 391–431 (ACTL…AWYE), 442–481 (LLTE…VWDI), 499–534 (PCKL…FYDH), 537–597 (SIVN…VYHL), 601–641 (GTKL…VWNY), 647–684 (LFSR…ILDA), 694–730 (PFKY…MLVV), 737–780 (WEYL…GYDL), 791–831 (LDIH…LFNA), 837–883 (RKTL…ILPV), 889–927 (KTSA…QWKI), 965–1005 (YFYY…FYPS), and 1025–1065 (GKLI…GYTN).

It is found in the cytoplasm. The protein localises to the cytoskeleton. The protein resides in the cilium axoneme. Its subcellular location is the cell projection. It localises to the cilium. It is found in the flagellum. Its function is as follows. Involved in spermatozoa motility. May also regulate cilium motility through its role in the assembly of the axonemal radial spokes. This chain is Cilia- and flagella-associated protein 251, found in Pongo abelii (Sumatran orangutan).